Reading from the N-terminus, the 418-residue chain is Tryptophan synthase beta chain 1 (418 aa).

At K99 the chain carries N6-(pyridoxal phosphate)lysine.

This sequence belongs to the TrpB family. In terms of assembly, tetramer of two alpha and two beta chains. Pyridoxal 5'-phosphate is required as a cofactor.

It carries out the reaction (1S,2R)-1-C-(indol-3-yl)glycerol 3-phosphate + L-serine = D-glyceraldehyde 3-phosphate + L-tryptophan + H2O. Its pathway is amino-acid biosynthesis; L-tryptophan biosynthesis; L-tryptophan from chorismate: step 5/5. In terms of biological role, the beta subunit is responsible for the synthesis of L-tryptophan from indole and L-serine. The polypeptide is Tryptophan synthase beta chain 1 (trpB1) (Corynebacterium efficiens (strain DSM 44549 / YS-314 / AJ 12310 / JCM 11189 / NBRC 100395)).